We begin with the raw amino-acid sequence, 192 residues long: Fe/S biogenesis protein NfuA (192 aa).

Residues cysteine 149 and cysteine 152 each contribute to the [4Fe-4S] cluster site.

This sequence belongs to the NfuA family. Homodimer. It depends on [4Fe-4S] cluster as a cofactor.

Its function is as follows. Involved in iron-sulfur cluster biogenesis. Binds a 4Fe-4S cluster, can transfer this cluster to apoproteins, and thereby intervenes in the maturation of Fe/S proteins. Could also act as a scaffold/chaperone for damaged Fe/S proteins. The protein is Fe/S biogenesis protein NfuA of Shewanella sediminis (strain HAW-EB3).